The primary structure comprises 275 residues: uncharacterized protein (275 aa).

The next 3 helical transmembrane spans lie at 15 to 35 (LFLP…FLGS), 39 to 59 (AIMI…FGLF), and 70 to 90 (ILYL…VVYL). Residues 140 to 191 (SSKTDMDSQVAEAPQTEEGEPSVNQVPQEAGASHRVGPYQDQGLATDRNGNP) are disordered.

Its subcellular location is the mitochondrion membrane. This is an uncharacterized protein from Arabidopsis thaliana (Mouse-ear cress).